Here is a 353-residue protein sequence, read N- to C-terminus: Paraxanthine methyltransferase 2 (353 aa).

Tyrosine 18 is an S-adenosyl-L-methionine binding site. Residues tyrosine 18 and 21–25 contribute to the substrate site; that span reads QSSYQ. Residues glycine 59, 59–60, asparagine 65, 99–102, 128–130, and 145–147 each bind S-adenosyl-L-methionine; these read GC, FNDL, SFF, and SYA. 146–150 is a binding site for substrate; that stretch reads YAFLF. Mg(2+) is bound by residues asparagine 167, aspartate 252, and phenylalanine 254. 2 residues coordinate substrate: serine 301 and tyrosine 306.

This sequence belongs to the methyltransferase superfamily. SABATH family. As to quaternary structure, homodimer. Mg(2+) serves as cofactor.

The polypeptide is Paraxanthine methyltransferase 2 (Arabidopsis thaliana (Mouse-ear cress)).